Here is a 1503-residue protein sequence, read N- to C-terminus: DNA-directed RNA polymerase subunit beta' (1503 aa).

The Zn(2+) site is built by Cys60, Cys62, Cys75, and Cys78. Asp626, Asp628, and Asp630 together coordinate Mg(2+). Cys1002, Cys1075, Cys1082, and Cys1085 together coordinate Zn(2+). The disordered stretch occupies residues 1439-1503 (EESQQAEEAP…EEEDNDLPAF (65 aa)). Over residues 1486–1503 (GDNDQSDAEEEDNDLPAF) the composition is skewed to acidic residues.

This sequence belongs to the RNA polymerase beta' chain family. In terms of assembly, the RNAP catalytic core consists of 2 alpha, 1 beta, 1 beta' and 1 omega subunit. When a sigma factor is associated with the core the holoenzyme is formed, which can initiate transcription. The cofactor is Mg(2+). Requires Zn(2+) as cofactor.

It carries out the reaction RNA(n) + a ribonucleoside 5'-triphosphate = RNA(n+1) + diphosphate. In terms of biological role, DNA-dependent RNA polymerase catalyzes the transcription of DNA into RNA using the four ribonucleoside triphosphates as substrates. This is DNA-directed RNA polymerase subunit beta' from Chloroflexus aurantiacus (strain ATCC 29364 / DSM 637 / Y-400-fl).